A 124-amino-acid chain; its full sequence is Pal-related lipoprotein (124 aa).

The first 18 residues, Met-1–Gly-18, serve as a signal peptide directing secretion. Cys-19 is lipidated: N-palmitoyl cysteine. Cys-19 carries S-diacylglycerol cysteine lipidation.

It is found in the cell membrane. This is Pal-related lipoprotein (slp) from Bacillus subtilis (strain 168).